The chain runs to 303 residues: N-acetyl-D-glucosamine kinase (303 aa).

ATP contacts are provided by residues 4–11 (GFDIGGTK) and 133–140 (GVGGGLIF). Zn(2+) contacts are provided by His157, Cys177, Cys179, and Cys184.

The protein belongs to the ROK (NagC/XylR) family. NagK subfamily.

The enzyme catalyses N-acetyl-D-glucosamine + ATP = N-acetyl-D-glucosamine 6-phosphate + ADP + H(+). It functions in the pathway cell wall biogenesis; peptidoglycan recycling. Functionally, catalyzes the phosphorylation of N-acetyl-D-glucosamine (GlcNAc) derived from cell-wall degradation, yielding GlcNAc-6-P. The chain is N-acetyl-D-glucosamine kinase from Escherichia coli O139:H28 (strain E24377A / ETEC).